The following is a 345-amino-acid chain: Dihydroorotate dehydrogenase (quinone) (345 aa).

FMN contacts are provided by residues 65–69 and threonine 89; that span reads AGLDK. Lysine 69 is a binding site for substrate. Residue 114–118 participates in substrate binding; that stretch reads NRMGF. FMN-binding residues include asparagine 142 and asparagine 175. A substrate-binding site is contributed by asparagine 175. The Nucleophile role is filled by serine 178. Asparagine 180 lines the substrate pocket. FMN-binding residues include lysine 220 and threonine 248. Substrate is bound at residue 249 to 250; that stretch reads NT. FMN-binding positions include glycine 271, glycine 300, and 321 to 322; that span reads YT.

Belongs to the dihydroorotate dehydrogenase family. Type 2 subfamily. Monomer. The cofactor is FMN.

The protein resides in the cell membrane. It catalyses the reaction (S)-dihydroorotate + a quinone = orotate + a quinol. The protein operates within pyrimidine metabolism; UMP biosynthesis via de novo pathway; orotate from (S)-dihydroorotate (quinone route): step 1/1. Catalyzes the conversion of dihydroorotate to orotate with quinone as electron acceptor. The protein is Dihydroorotate dehydrogenase (quinone) of Burkholderia thailandensis (strain ATCC 700388 / DSM 13276 / CCUG 48851 / CIP 106301 / E264).